Reading from the N-terminus, the 891-residue chain is MSGVNEIRSTFLNFFAANGHEIVPSSPLVPRNDPTLMFTNAGMVQFKNVFTGVEKRPYHRATTSQKCVRAGGKHNDLDNVGYTARHHTFFEMLGNFSFGDYFKENAIELAWKLVTKEFGLPKDKLTATVYIDDDEAFGLWKKIAGLPESRIIRIAGSDNFWQMGDTGPCGPCSEIFYDHGDKIWGGPPGSAEADGDRFIEIWNLVFMQYEQLEGGVRNPLPKPSIDTGAGLERVAAVLQGKHDNYDIDLFVALIRAIADLTNADPQGPQKASLRVIADHLRASSFLISDGVLPSNEGRGYVLRRIMRRAMRHAQLLGAREPLMHKLVGALTREMGQAYPELIRAEGLIKETLRLEETRFRKTLERGLAILDEKSASLSKGDMFDGDVAFTLYDTYGFPLDLTQDALKSRGISVDQASFTDAMERQKAKARAAWAGSGEAATETVWFPLREKLGATEFLGYETETAEGAVTALVKDGAEVDSLKAGESGAIVLNQTPFYGESGGQVGDTGVLTGEGVRVRITDTQKKAGDLFAHIGTVEQGTLKLGTPLQLDVDHIRRSAIRANHSATHILHEALRQVLGDHIAQRGSLVSPDRLRFDFVHPKPITAEELARVEDIANDVVLENAEVTTRLMGLDDAREAGARALFGEKYGDEVRVVSMGNAARDHGNNAMGWSVELCGGTHVKRTGDIGLIAVTSESAVASGVRRIEALTARGARAHANHNLSLAKAAAAELRTTVDEVPARITALMEERKKLERELSDARKKLAMGGGAAAGGAAAGIREVAGIKLMARAVDGVEVKDLKSLVDEAKKQLGSGVVAIVGRSEDGKAGVVVGVTADLTARFNAVELVRAASEALGGKGGGGRPDMAQAGGPDGAKAEAALAAIESAIGKAG.

Zn(2+) is bound by residues His-564, His-568, Cys-677, and His-681.

The protein belongs to the class-II aminoacyl-tRNA synthetase family. Zn(2+) is required as a cofactor.

Its subcellular location is the cytoplasm. It catalyses the reaction tRNA(Ala) + L-alanine + ATP = L-alanyl-tRNA(Ala) + AMP + diphosphate. In terms of biological role, catalyzes the attachment of alanine to tRNA(Ala) in a two-step reaction: alanine is first activated by ATP to form Ala-AMP and then transferred to the acceptor end of tRNA(Ala). Also edits incorrectly charged Ser-tRNA(Ala) and Gly-tRNA(Ala) via its editing domain. This chain is Alanine--tRNA ligase, found in Bradyrhizobium sp. (strain ORS 278).